Reading from the N-terminus, the 677-residue chain is UvrABC system protein B (677 aa).

Residues 24–412 (EGVLQGVPAQ…EGIVVEQVIR (389 aa)) enclose the Helicase ATP-binding domain. An ATP-binding site is contributed by 37-44 (GVTGSGKT). A Beta-hairpin motif is present at residues 90–113 (YYDYYQPEAYLPNSDTYIEKDLAI). A Helicase C-terminal domain is found at 429-591 (QIDDLMEEIQ…ITPQQIKKAR (163 aa)). The region spanning 636–671 (EKSIERTRKLMQEAAKKLEFIEAAQYRNELLKLEDL) is the UVR domain.

This sequence belongs to the UvrB family. Forms a heterotetramer with UvrA during the search for lesions. Interacts with UvrC in an incision complex.

It localises to the cytoplasm. In terms of biological role, the UvrABC repair system catalyzes the recognition and processing of DNA lesions. A damage recognition complex composed of 2 UvrA and 2 UvrB subunits scans DNA for abnormalities. Upon binding of the UvrA(2)B(2) complex to a putative damaged site, the DNA wraps around one UvrB monomer. DNA wrap is dependent on ATP binding by UvrB and probably causes local melting of the DNA helix, facilitating insertion of UvrB beta-hairpin between the DNA strands. Then UvrB probes one DNA strand for the presence of a lesion. If a lesion is found the UvrA subunits dissociate and the UvrB-DNA preincision complex is formed. This complex is subsequently bound by UvrC and the second UvrB is released. If no lesion is found, the DNA wraps around the other UvrB subunit that will check the other stand for damage. The polypeptide is UvrABC system protein B (Bacteroides thetaiotaomicron (strain ATCC 29148 / DSM 2079 / JCM 5827 / CCUG 10774 / NCTC 10582 / VPI-5482 / E50)).